The following is a 523-amino-acid chain: GMP synthase [glutamine-hydrolyzing] (523 aa).

Residues 8 to 205 (KILILDFGSQ…VVGICGCECK (198 aa)) enclose the Glutamine amidotransferase type-1 domain. Catalysis depends on Cys85, which acts as the Nucleophile. Active-site residues include His179 and Glu181. The region spanning 206 to 398 (WTAENIIERR…LGLPAEMLNR (193 aa)) is the GMPS ATP-PPase domain. Residue 233 to 239 (SGGVDSS) participates in ATP binding.

Homodimer.

It catalyses the reaction XMP + L-glutamine + ATP + H2O = GMP + L-glutamate + AMP + diphosphate + 2 H(+). It functions in the pathway purine metabolism; GMP biosynthesis; GMP from XMP (L-Gln route): step 1/1. In terms of biological role, catalyzes the synthesis of GMP from XMP. In Actinobacillus pleuropneumoniae serotype 5b (strain L20), this protein is GMP synthase [glutamine-hydrolyzing].